The primary structure comprises 278 residues: Putative pyruvate, phosphate dikinase regulatory protein (278 aa).

156–163 (GVSRTSKT) provides a ligand contact to ADP.

It belongs to the pyruvate, phosphate/water dikinase regulatory protein family. PDRP subfamily.

The enzyme catalyses N(tele)-phospho-L-histidyl/L-threonyl-[pyruvate, phosphate dikinase] + ADP = N(tele)-phospho-L-histidyl/O-phospho-L-threonyl-[pyruvate, phosphate dikinase] + AMP + H(+). It carries out the reaction N(tele)-phospho-L-histidyl/O-phospho-L-threonyl-[pyruvate, phosphate dikinase] + phosphate + H(+) = N(tele)-phospho-L-histidyl/L-threonyl-[pyruvate, phosphate dikinase] + diphosphate. In terms of biological role, bifunctional serine/threonine kinase and phosphorylase involved in the regulation of the pyruvate, phosphate dikinase (PPDK) by catalyzing its phosphorylation/dephosphorylation. In Lactobacillus acidophilus (strain ATCC 700396 / NCK56 / N2 / NCFM), this protein is Putative pyruvate, phosphate dikinase regulatory protein.